A 351-amino-acid polypeptide reads, in one-letter code: Porphobilinogen deaminase (351 aa).

Cys242 carries the post-translational modification S-(dipyrrolylmethanemethyl)cysteine.

It belongs to the HMBS family. In terms of assembly, monomer. Requires dipyrromethane as cofactor.

The enzyme catalyses 4 porphobilinogen + H2O = hydroxymethylbilane + 4 NH4(+). Its pathway is porphyrin-containing compound metabolism; protoporphyrin-IX biosynthesis; coproporphyrinogen-III from 5-aminolevulinate: step 2/4. Its function is as follows. Tetrapolymerization of the monopyrrole PBG into the hydroxymethylbilane pre-uroporphyrinogen in several discrete steps. The chain is Porphobilinogen deaminase from Rickettsia peacockii (strain Rustic).